Here is a 742-residue protein sequence, read N- to C-terminus: Synaptic vesicle glycoprotein 2A (742 aa).

Positions 1–57 are interaction with SYT1; the sequence is MEEGFRDRAAFIRGAKDIAKEVKKHATKKVVKGLDRVQDEYSRRSYSRFEEEDDDDD. Topologically, residues 1–169 are cytoplasmic; the sequence is MEEGFRDRAA…GHGRFQWTLY (169 aa). Residues 32-49 show a composition bias toward basic and acidic residues; the sequence is KGLDRVQDEYSRRSYSRF. Positions 32–144 are disordered; sequence KGLDRVQDEY…GRGEAQRRKE (113 aa). Phosphoserine is present on residues Ser-80 and Ser-81. Thr-84 carries the phosphothreonine modification. Positions 122–137 are enriched in gly residues; it reads VRGGLGDGEGPPGGRG. The helical transmembrane segment at 170-190 threads the bilayer; the sequence is FVLGLALMADGVEVFVVGFVL. Residues 191-205 are Extracellular-facing; that stretch reads PSAEKDMCLSDSNKG. A helical membrane pass occupies residues 206–226; that stretch reads MLGLIVYLGMMVGAFLWGGLA. Over 227-233 the chain is Cytoplasmic; sequence DRLGRRQ. The helical transmembrane segment at 234–254 threads the bilayer; it reads CLLISLSVNSVFAFFSSFVQG. Over 255–262 the chain is Extracellular; it reads YGTFLFCR. The chain crosses the membrane as a helical span at residues 263–283; the sequence is LLSGVGIGGSIPIVFSYFSEF. Residues 284 to 294 lie on the Cytoplasmic side of the membrane; it reads LAQEKRGEHLS. The helical transmembrane segment at 295–315 threads the bilayer; that stretch reads WLCMFWMIGGVYAAAMAWAII. Residues 316–334 lie on the Extracellular side of the membrane; the sequence is PHYGWSFQMGSAYQFHSWR. The chain crosses the membrane as a helical span at residues 335 to 355; the sequence is VFVLVCAFPSVFAIGALTTQP. Residues 356-447 are Cytoplasmic-facing; that stretch reads ESPRFFLENG…CFGPEYRRIT (92 aa). Ser-393 carries the phosphoserine modification. The chain crosses the membrane as a helical span at residues 448–468; it reads LMMMGVWFTMSFSYYGLTVWF. Over 469-598 the chain is Extracellular; it reads PDMIRHLQAV…GTGEGAYMVY (130 aa). A Phosphotyrosine modification is found at Tyr-480. Residues Asn-498, Asn-548, and Asn-573 are each glycosylated (N-linked (GlcNAc...) asparagine). A helical membrane pass occupies residues 599-619; that stretch reads FVSFLGTLAVLPGNIVSALLM. Residues 620–626 are Cytoplasmic-facing; the sequence is DKIGRLR. The chain crosses the membrane as a helical span at residues 627–647; the sequence is MLAGSSVMSCVSCFFLSFGNS. Over 648 to 651 the chain is Extracellular; the sequence is ESAM. A helical membrane pass occupies residues 652–672; the sequence is IALLCLFGGVSIASWNALDVL. The Cytoplasmic portion of the chain corresponds to 673 to 685; the sequence is TVELYPSDKRTTA. The chain crosses the membrane as a helical span at residues 686–708; that stretch reads FGFLNALCKLAAVLGISIFTSFV. Residues 709–712 are Extracellular-facing; sequence GITK. Residues 713 to 731 traverse the membrane as a helical segment; that stretch reads AAPILFASAALALGSSLAL. Over 732–742 the chain is Cytoplasmic; that stretch reads KLPETRGQVLQ.

It belongs to the major facilitator superfamily. As to quaternary structure, interacts with SYT1/synaptotagmin-1 in a calcium-dependent manner. Binds the adapter protein complex AP-2. In terms of processing, phosphorylation by CK1 of the N-terminal cytoplasmic domain regulates interaction with SYT1. N-glycosylated.

The protein resides in the presynapse. Its subcellular location is the cytoplasmic vesicle. It localises to the secretory vesicle. The protein localises to the synaptic vesicle membrane. Its function is as follows. Plays a role in the control of regulated secretion in neural and endocrine cells, enhancing selectively low-frequency neurotransmission. Positively regulates vesicle fusion by maintaining the readily releasable pool of secretory vesicles. This is Synaptic vesicle glycoprotein 2A (SV2A) from Bos taurus (Bovine).